The chain runs to 274 residues: Large ribosomal subunit protein uL2 (274 aa).

Disordered regions lie at residues 28–55 (APHA…RHVG) and 224–274 (VAMN…RRRK).

The protein belongs to the universal ribosomal protein uL2 family. Part of the 50S ribosomal subunit. Forms a bridge to the 30S subunit in the 70S ribosome.

In terms of biological role, one of the primary rRNA binding proteins. Required for association of the 30S and 50S subunits to form the 70S ribosome, for tRNA binding and peptide bond formation. It has been suggested to have peptidyltransferase activity; this is somewhat controversial. Makes several contacts with the 16S rRNA in the 70S ribosome. The protein is Large ribosomal subunit protein uL2 of Pseudomonas putida (strain W619).